The following is a 227-amino-acid chain: Interleukin-6 (227 aa).

An N-terminal signal peptide occupies residues 1–22; sequence MASISYLLAPLVLAAVLQPTAG. The disordered stretch occupies residues 24–45; sequence PLDAPTESPAGETSGEEAETGS. Residues C93 and C103 are joined by a disulfide bond.

Belongs to the IL-6 superfamily. Component of a hexamer of two molecules each of IL6, IL6R and IL6ST; first binds to IL6R to associate with the signaling subunit IL6ST. After induction, highly expressed in spleen. Can also be expressed in kidney after incubation with PHA.

Its subcellular location is the secreted. Functionally, cytokine with a wide variety of biological functions in immunity, tissue regeneration, and metabolism. Binds to IL6R, then the complex associates to the signaling subunit IL6ST/gp130 to trigger the intracellular IL6-signaling pathway. The interaction with the membrane-bound IL6R and IL6ST stimulates 'classic signaling', whereas the binding of IL6 and soluble IL6R to IL6ST stimulates 'trans-signaling'. Alternatively, 'cluster signaling' occurs when membrane-bound IL6:IL6R complexes on transmitter cells activate IL6ST receptors on neighboring receiver cells. This is Interleukin-6 (il6) from Takifugu rubripes (Japanese pufferfish).